The primary structure comprises 319 residues: ATP-dependent 6-phosphofructokinase (319 aa).

Residue Gly11 coordinates ATP. 21–25 (RAVVR) is an ADP binding site. ATP is bound by residues 72 to 73 (RC) and 102 to 105 (GDGS). Asp103 contacts Mg(2+). 125–127 (TID) is a substrate binding site. The Proton acceptor role is filled by Asp127. Position 154 (Arg154) interacts with ADP. Substrate-binding positions include Arg162 and 169 to 171 (MGR). ADP is bound by residues 185–187 (GAE), Arg211, and 213–215 (KKH). Residues Glu222, Arg243, and 249–252 (HVQR) contribute to the substrate site.

The protein belongs to the phosphofructokinase type A (PFKA) family. ATP-dependent PFK group I subfamily. Prokaryotic clade 'B1' sub-subfamily. In terms of assembly, homotetramer. It depends on Mg(2+) as a cofactor.

It is found in the cytoplasm. It catalyses the reaction beta-D-fructose 6-phosphate + ATP = beta-D-fructose 1,6-bisphosphate + ADP + H(+). It participates in carbohydrate degradation; glycolysis; D-glyceraldehyde 3-phosphate and glycerone phosphate from D-glucose: step 3/4. Its activity is regulated as follows. Allosterically activated by ADP and other diphosphonucleosides, and allosterically inhibited by phosphoenolpyruvate. In terms of biological role, catalyzes the phosphorylation of D-fructose 6-phosphate to fructose 1,6-bisphosphate by ATP, the first committing step of glycolysis. In Anoxybacillus flavithermus (strain DSM 21510 / WK1), this protein is ATP-dependent 6-phosphofructokinase.